The following is a 269-amino-acid chain: ATP synthase subunit delta (269 aa).

This sequence belongs to the ATPase delta chain family. F-type ATPases have 2 components, F(1) - the catalytic core - and F(0) - the membrane proton channel. F(1) has five subunits: alpha(3), beta(3), gamma(1), delta(1), epsilon(1). F(0) has three main subunits: a(1), b(2) and c(10-14). The alpha and beta chains form an alternating ring which encloses part of the gamma chain. F(1) is attached to F(0) by a central stalk formed by the gamma and epsilon chains, while a peripheral stalk is formed by the delta and b chains.

It localises to the cell membrane. F(1)F(0) ATP synthase produces ATP from ADP in the presence of a proton or sodium gradient. F-type ATPases consist of two structural domains, F(1) containing the extramembraneous catalytic core and F(0) containing the membrane proton channel, linked together by a central stalk and a peripheral stalk. During catalysis, ATP synthesis in the catalytic domain of F(1) is coupled via a rotary mechanism of the central stalk subunits to proton translocation. Functionally, this protein is part of the stalk that links CF(0) to CF(1). It either transmits conformational changes from CF(0) to CF(1) or is implicated in proton conduction. This is ATP synthase subunit delta from Thermobifida fusca (strain YX).